Reading from the N-terminus, the 299-residue chain is GTPase Era (299 aa).

Positions 9–177 (RSGSVAVIGR…VGDLLKLVPE (169 aa)) constitute an Era-type G domain. Positions 17 to 24 (GRPNVGKS) are G1. 17–24 (GRPNVGKS) lines the GTP pocket. A G2 region spans residues 43–47 (QTTRH). The G3 stretch occupies residues 64–67 (DTPG). Residues 64–68 (DTPGL) and 126–129 (NKVD) contribute to the GTP site. Residues 126-129 (NKVD) form a G4 region. The tract at residues 156–158 (VSA) is G5. The region spanning 200–284 (VREQLMRQLG…FLETWVRVRE (85 aa)) is the KH type-2 domain.

It belongs to the TRAFAC class TrmE-Era-EngA-EngB-Septin-like GTPase superfamily. Era GTPase family. Monomer.

It is found in the cytoplasm. The protein resides in the cell inner membrane. In terms of biological role, an essential GTPase that binds both GDP and GTP, with rapid nucleotide exchange. Plays a role in 16S rRNA processing and 30S ribosomal subunit biogenesis and possibly also in cell cycle regulation and energy metabolism. This is GTPase Era from Xanthomonas axonopodis pv. citri (strain 306).